Reading from the N-terminus, the 112-residue chain is Divalent-cation tolerance protein CutA (112 aa).

Cu cation is bound by residues Cys16, His83, and His84.

Belongs to the CutA family. In terms of assembly, homotrimer. Cu cation is required as a cofactor.

The protein localises to the cytoplasm. In terms of biological role, involved in resistance toward heavy metals. This is Divalent-cation tolerance protein CutA from Shigella flexneri.